A 651-amino-acid polypeptide reads, in one-letter code: Threonine--tRNA ligase (651 aa).

The 64-residue stretch at 1-64 (MSSVVHVTLP…EKDCTLQVLT (64 aa)) folds into the TGS domain. Residues 245–535 (DHRRLGPELG…LTEHYAGNFP (291 aa)) form a catalytic region. Residues Cys336, His387, and His512 each contribute to the Zn(2+) site.

It belongs to the class-II aminoacyl-tRNA synthetase family. Homodimer. It depends on Zn(2+) as a cofactor.

The protein localises to the cytoplasm. It catalyses the reaction tRNA(Thr) + L-threonine + ATP = L-threonyl-tRNA(Thr) + AMP + diphosphate + H(+). Catalyzes the attachment of threonine to tRNA(Thr) in a two-step reaction: L-threonine is first activated by ATP to form Thr-AMP and then transferred to the acceptor end of tRNA(Thr). Also edits incorrectly charged L-seryl-tRNA(Thr). The polypeptide is Threonine--tRNA ligase (Symbiobacterium thermophilum (strain DSM 24528 / JCM 14929 / IAM 14863 / T)).